A 515-amino-acid chain; its full sequence is 3-[(3aS,4S,7aS)-7a-methyl-1,5-dioxo-octahydro-1H-inden-4-yl]propanoyl:CoA ligase (515 aa).

ATP contacts are provided by residues 185–193, D398, R413, and K504; that span reads TSGTTGRSK.

It belongs to the ATP-dependent AMP-binding enzyme family.

The enzyme catalyses 3-[(3aS,4S,7aS)-7a-methyl-1,5-dioxo-octahydro-1H-inden-4-yl]propanoate + ATP + CoA = 3-[(3aS,4S,7aS)-7a-methyl-1,5-dioxo-octahydro-1H-inden-4-yl]propanoyl-CoA + AMP + diphosphate. Involved in the catabolism of the rings C and D of cholesterol. Catalyzes the ATP-dependent CoA thioesterification of 3aalpha-H-4alpha(3'-propanoate)-7abeta-methylhexahydro-1,5-indanedione (HIP). This chain is 3-[(3aS,4S,7aS)-7a-methyl-1,5-dioxo-octahydro-1H-inden-4-yl]propanoyl:CoA ligase, found in Rhodococcus jostii (strain RHA1).